The following is a 305-amino-acid chain: Orotidine 5'-phosphate decarboxylase (305 aa).

Lysine 108 serves as the catalytic Proton donor.

It belongs to the OMP decarboxylase family. Type 2 subfamily.

The catalysed reaction is orotidine 5'-phosphate + H(+) = UMP + CO2. It participates in pyrimidine metabolism; UMP biosynthesis via de novo pathway; UMP from orotate: step 2/2. The polypeptide is Orotidine 5'-phosphate decarboxylase (Caldicellulosiruptor bescii (strain ATCC BAA-1888 / DSM 6725 / KCTC 15123 / Z-1320) (Anaerocellum thermophilum)).